A 106-amino-acid chain; its full sequence is Large ribosomal subunit protein bL31B (106 aa).

A disordered region spans residues 85–106; it reads PVQVAEEPVAKGKKKPSLKKKK. Residues 95–106 are compositionally biased toward basic residues; that stretch reads KGKKKPSLKKKK.

The protein belongs to the bacterial ribosomal protein bL31 family. Type B subfamily. In terms of assembly, part of the 50S ribosomal subunit.

This Chlamydia felis (strain Fe/C-56) (Chlamydophila felis) protein is Large ribosomal subunit protein bL31B.